The following is a 115-amino-acid chain: Nucleoid-associated protein LA_4332 (115 aa).

This sequence belongs to the YbaB/EbfC family. As to quaternary structure, homodimer.

Its subcellular location is the cytoplasm. The protein resides in the nucleoid. Binds to DNA and alters its conformation. May be involved in regulation of gene expression, nucleoid organization and DNA protection. This Leptospira interrogans serogroup Icterohaemorrhagiae serovar Lai (strain 56601) protein is Nucleoid-associated protein LA_4332.